A 141-amino-acid polypeptide reads, in one-letter code: uncharacterized protein (141 aa).

One can recognise a Ferritin-like diiron domain in the interval 13 to 141 (VTKGTELEKE…LKGILDRYFK (129 aa)). Residues E63, H66, E125, and H128 each contribute to the Fe cation site.

This is an uncharacterized protein from Methanocaldococcus jannaschii (strain ATCC 43067 / DSM 2661 / JAL-1 / JCM 10045 / NBRC 100440) (Methanococcus jannaschii).